We begin with the raw amino-acid sequence, 84 residues long: Envelope small membrane protein (84 aa).

At 1–18 the chain is on the virion surface side; it reads MFMADAYLADTVWYVGQI. A helical membrane pass occupies residues 19 to 39; the sequence is IFIVAICLLVTIVVVAFLATF. Residues 40–80 lie on the Intravirion side of the membrane; sequence KLCIQLCGMCNTLVLSPSIYVFNRGRQFYEFYNDVKPPVLD.

Belongs to the betacoronaviruses E protein family. Homopentamer. Interacts with membrane protein M in the budding compartment of the host cell, which is located between endoplasmic reticulum and the Golgi complex. Interacts with Nucleoprotein.

The protein resides in the host Golgi apparatus membrane. In terms of biological role, plays a central role in virus morphogenesis and assembly. Acts as a viroporin and self-assembles in host membranes forming pentameric protein-lipid pores that allow ion transport. Also plays a role in the induction of apoptosis. The protein is Envelope small membrane protein of Human coronavirus OC43 (HCoV-OC43).